The primary structure comprises 312 residues: Bifunctional pinoresinol-lariciresinol reductase (312 aa).

Residues 11-17, R36, and K45 each bind NADP(+); that span reads GGTGYIG. K138 serves as the catalytic Proton acceptor. R142 contacts NADP(+). H270 lines the substrate pocket.

Belongs to the NmrA-type oxidoreductase family. Isoflavone reductase subfamily. In terms of assembly, dimer.

It catalyses the reaction (+)-lariciresinol + NADP(+) = (+)-pinoresinol + NADPH + H(+). It carries out the reaction (-)-secoisolariciresinol + NADP(+) = (+)-lariciresinol + NADPH + H(+). Its function is as follows. Reductase involved in lignan biosynthesis. Catalyzes the enantioselective sequential conversion of (+)-pinoresinol into (+)-lariciresinol and of (+)-lariciresinol into (-)-secoisolariciresinol. Abstracts the 4R-hydride from the NADPH cofactor during catalysis. The sequence is that of Bifunctional pinoresinol-lariciresinol reductase from Thuja plicata (Western red-cedar).